The sequence spans 633 residues: 1-deoxy-D-xylulose-5-phosphate synthase (633 aa).

Residues 1–22 (MPTTFHEIPRKRPTTPLLDRAQ) form a disordered region. Thiamine diphosphate contacts are provided by residues H87 and 128 to 130 (GHS). Mg(2+) is bound at residue D159. Thiamine diphosphate is bound by residues 160–161 (GA), N188, F295, and E378. Mg(2+) is bound at residue N188.

Belongs to the transketolase family. DXPS subfamily. In terms of assembly, homodimer. Requires Mg(2+) as cofactor. Thiamine diphosphate is required as a cofactor.

The catalysed reaction is D-glyceraldehyde 3-phosphate + pyruvate + H(+) = 1-deoxy-D-xylulose 5-phosphate + CO2. It participates in metabolic intermediate biosynthesis; 1-deoxy-D-xylulose 5-phosphate biosynthesis; 1-deoxy-D-xylulose 5-phosphate from D-glyceraldehyde 3-phosphate and pyruvate: step 1/1. In terms of biological role, catalyzes the acyloin condensation reaction between C atoms 2 and 3 of pyruvate and glyceraldehyde 3-phosphate to yield 1-deoxy-D-xylulose-5-phosphate (DXP). The sequence is that of 1-deoxy-D-xylulose-5-phosphate synthase from Pseudomonas fluorescens (strain ATCC BAA-477 / NRRL B-23932 / Pf-5).